The primary structure comprises 464 residues: Serine carboxypeptidase-like 22 (464 aa).

Residues Met-1–Ser-22 form the signal peptide. Residues Asn-52, Asn-113, and Asn-137 are each glycosylated (N-linked (GlcNAc...) asparagine). Cystine bridges form between Cys-86-Cys-346, Cys-247-Cys-258, and Cys-282-Cys-314. The active site involves Ser-179. Asn-290 and Asn-335 each carry an N-linked (GlcNAc...) asparagine glycan. Active-site residues include Asp-385 and His-437.

The protein belongs to the peptidase S10 family. Expression not detected.

Its subcellular location is the secreted. In terms of biological role, probable carboxypeptidase. This Arabidopsis thaliana (Mouse-ear cress) protein is Serine carboxypeptidase-like 22 (SCPL22).